Consider the following 307-residue polypeptide: Coproporphyrin III ferrochelatase (307 aa).

Fe-coproporphyrin III contacts are provided by residues Tyr-12, Arg-29, 45-46 (RY), Ser-53, and Tyr-124. His-181 and Glu-263 together coordinate Fe(2+).

This sequence belongs to the ferrochelatase family.

It localises to the cytoplasm. It carries out the reaction Fe-coproporphyrin III + 2 H(+) = coproporphyrin III + Fe(2+). It participates in porphyrin-containing compound metabolism; protoheme biosynthesis. Functionally, involved in coproporphyrin-dependent heme b biosynthesis. Catalyzes the insertion of ferrous iron into coproporphyrin III to form Fe-coproporphyrin III. This is Coproporphyrin III ferrochelatase from Staphylococcus saprophyticus subsp. saprophyticus (strain ATCC 15305 / DSM 20229 / NCIMB 8711 / NCTC 7292 / S-41).